The sequence spans 565 residues: Dihydroxy-acid dehydratase (565 aa).

Cys53 contacts [2Fe-2S] cluster. Asp85 lines the Mg(2+) pocket. Cys126 is a binding site for [2Fe-2S] cluster. The Mg(2+) site is built by Asp127 and Lys128. Lys128 is subject to N6-carboxylysine. Cys198 contacts [2Fe-2S] cluster. A Mg(2+)-binding site is contributed by Glu450. Residue Ser476 is the Proton acceptor of the active site.

Belongs to the IlvD/Edd family. As to quaternary structure, homodimer. It depends on [2Fe-2S] cluster as a cofactor. Requires Mg(2+) as cofactor.

The catalysed reaction is (2R)-2,3-dihydroxy-3-methylbutanoate = 3-methyl-2-oxobutanoate + H2O. It catalyses the reaction (2R,3R)-2,3-dihydroxy-3-methylpentanoate = (S)-3-methyl-2-oxopentanoate + H2O. Its pathway is amino-acid biosynthesis; L-isoleucine biosynthesis; L-isoleucine from 2-oxobutanoate: step 3/4. It functions in the pathway amino-acid biosynthesis; L-valine biosynthesis; L-valine from pyruvate: step 3/4. Functions in the biosynthesis of branched-chain amino acids. Catalyzes the dehydration of (2R,3R)-2,3-dihydroxy-3-methylpentanoate (2,3-dihydroxy-3-methylvalerate) into 2-oxo-3-methylpentanoate (2-oxo-3-methylvalerate) and of (2R)-2,3-dihydroxy-3-methylbutanoate (2,3-dihydroxyisovalerate) into 2-oxo-3-methylbutanoate (2-oxoisovalerate), the penultimate precursor to L-isoleucine and L-valine, respectively. The protein is Dihydroxy-acid dehydratase of Synechococcus sp. (strain JA-2-3B'a(2-13)) (Cyanobacteria bacterium Yellowstone B-Prime).